Consider the following 147-residue polypeptide: Hemoglobin subunit beta-2 (147 aa).

Residues 3-147 (EWTDEERTII…VVSALGRQYH (145 aa)) enclose the Globin domain. Heme b-binding residues include His-64 and His-93.

Belongs to the globin family. Hb 2 is a heterotetramer of two alpha-2 and two beta-2 chains. Hb 3 is a heterotetramer of two alpha-1 and two beta-2 chains. As to expression, red blood cells.

Its function is as follows. Involved in oxygen transport from gills to the various peripheral tissues. The sequence is that of Hemoglobin subunit beta-2 (hbb2) from Gadus morhua (Atlantic cod).